The chain runs to 304 residues: Porphobilinogen deaminase (304 aa).

Cysteine 241 carries the S-(dipyrrolylmethanemethyl)cysteine modification.

Belongs to the HMBS family. Monomer. The cofactor is dipyrromethane.

The catalysed reaction is 4 porphobilinogen + H2O = hydroxymethylbilane + 4 NH4(+). It participates in porphyrin-containing compound metabolism; protoporphyrin-IX biosynthesis; coproporphyrinogen-III from 5-aminolevulinate: step 2/4. Tetrapolymerization of the monopyrrole PBG into the hydroxymethylbilane pre-uroporphyrinogen in several discrete steps. The sequence is that of Porphobilinogen deaminase from Vesicomyosocius okutanii subsp. Calyptogena okutanii (strain HA).